A 1038-amino-acid chain; its full sequence is Type I restriction enzyme EcoR124I/EcoR124II endonuclease subunit (1038 aa).

A nuclease domain region spans residues 31–249; it reads QSESDLEREL…LKDFTATCFQ (219 aa). The tract at residues 250-469 is motor 1 domain; it reads KHTLLNVLVN…SYVITDAIRD (220 aa). The region spanning 294–439 is the Helicase ATP-binding domain; that stretch reads KNWSKPESGG…YQFGFTGTPI (146 aa). 307-314 contributes to the ATP binding site; sequence HTTGSGKT. The short motif at 408-411 is the DEAH box element; it reads DECH. The segment at 470 to 702 is motor 2 domain; sequence EKVLKFKVDY…YDATKTFGNI (233 aa). A motor 2-helicase linker region spans residues 720 to 732; it reads GDKNTKNVVLEKS. Residues 732–860 are helicase domain; that stretch reads SYTEYMEGFT…NDIRDWQRRE (129 aa). Residues 859-886 form a helicase-CTD linker region; that stretch reads REKEAEKKEKSTTDWDDVVFEVDLLKSQ. The tract at residues 886–1038 is C-terminal domain; that stretch reads QEINLDYILG…EKFKGVGGKI (153 aa).

This sequence belongs to the HsdR family. In terms of assembly, a monomer in solution. The type I restriction/modification system is composed of three polypeptides R, M and S; the restriction enzyme has stoichiometry R(2)M(2)S(1) while the methyltransferase is M(2)S(1). There is an equilibrium between R(2)M(2)S(1) and R(1)M(2)S(1); the latter is methylation and translocation proficient but restriction deficient. (Microbial infection) Holoenenzyme interacts with Escherichia phage T7 protein Ocr; this interaction leads to the inhibition of the restriction activity, but may still allow methylation and translocation.

The enzyme catalyses Endonucleolytic cleavage of DNA to give random double-stranded fragments with terminal 5'-phosphates, ATP is simultaneously hydrolyzed.. Its function is as follows. The restriction (R) subunit of a type I restriction enzyme that recognizes 5'-GAAN(6)RTCG-3' (for EcoR124I) and 5'-GAAN(7)RTCG-3' (for EcoR124II) and cleaves a random distance away. Subunit R is required for both nuclease and ATPase activities, but not for modification. After locating an unmethylated recognition site, the enzyme complex serves as a molecular motor that translocates DNA in an ATP-dependent manner until a collision occurs that triggers cleavage. The enzyme undergoes major structural changes to bring the motor domains into contact with DNA, allowing DNA translocation. This prevents DNA access to the catalytic domains of both the R and M subunits, preventing both restriction and methylation. The R(1)M(2)S(1) complex translocates an average of 555 bp/second on nicked DNA; the R(2)M(2)S(1) complex translocates at double that speed. The 2 R subunit motors are independent and track along the helical pitch of the DNA, inducing positive supercoiling ahead of themselves. This chain is Type I restriction enzyme EcoR124I/EcoR124II endonuclease subunit, found in Escherichia coli.